The chain runs to 94 residues: UPF0235 protein TON_0641 (94 aa).

The protein belongs to the UPF0235 family.

This is UPF0235 protein TON_0641 from Thermococcus onnurineus (strain NA1).